Reading from the N-terminus, the 333-residue chain is Putative ketol-acid reductoisomerase 2 (333 aa).

The 182-residue stretch at 1–182 folds into the KARI N-terminal Rossmann domain; sequence MDKTVLDANL…AIPGGIAVIS (182 aa). The KARI C-terminal knotted domain maps to 183-329; it reads SFEEEALLDL…KELYKLLGRK (147 aa).

It belongs to the ketol-acid reductoisomerase family.

The enzyme catalyses (2R)-2,3-dihydroxy-3-methylbutanoate + NADP(+) = (2S)-2-acetolactate + NADPH + H(+). It carries out the reaction (2R,3R)-2,3-dihydroxy-3-methylpentanoate + NADP(+) = (S)-2-ethyl-2-hydroxy-3-oxobutanoate + NADPH + H(+). Its pathway is amino-acid biosynthesis; L-isoleucine biosynthesis; L-isoleucine from 2-oxobutanoate: step 2/4. It functions in the pathway amino-acid biosynthesis; L-valine biosynthesis; L-valine from pyruvate: step 2/4. This is Putative ketol-acid reductoisomerase 2 (ilvC2) from Saccharolobus solfataricus (strain ATCC 35092 / DSM 1617 / JCM 11322 / P2) (Sulfolobus solfataricus).